The primary structure comprises 323 residues: Prenyl transferase (323 aa).

Isopentenyl diphosphate contacts are provided by Lys46, Arg49, and His81. Positions 88 and 92 each coordinate Mg(2+). An all-trans-polyprenyl diphosphate is bound at residue Arg97. Arg98 is a binding site for isopentenyl diphosphate. An all-trans-polyprenyl diphosphate contacts are provided by Lys174, Thr175, and Gln212.

Belongs to the FPP/GGPP synthase family. Mg(2+) serves as cofactor.

Its function is as follows. Possible role in synthesis of the nonaprenyl side chain of plastoquinone or in synthesis of other prenyl chains such as undekaprenyl pyrophosphate. The sequence is that of Prenyl transferase (preA) from Synechocystis sp. (strain ATCC 27184 / PCC 6803 / Kazusa).